Reading from the N-terminus, the 196-residue chain is Potassium-transporting ATPase KdpC subunit (196 aa).

Residues 7–27 form a helical membrane-spanning segment; the sequence is PALVLFFVLTLLTGVAYPLAV.

This sequence belongs to the KdpC family. As to quaternary structure, the system is composed of three essential subunits: KdpA, KdpB and KdpC.

It localises to the cell inner membrane. Part of the high-affinity ATP-driven potassium transport (or Kdp) system, which catalyzes the hydrolysis of ATP coupled with the electrogenic transport of potassium into the cytoplasm. This subunit acts as a catalytic chaperone that increases the ATP-binding affinity of the ATP-hydrolyzing subunit KdpB by the formation of a transient KdpB/KdpC/ATP ternary complex. This chain is Potassium-transporting ATPase KdpC subunit, found in Polaromonas naphthalenivorans (strain CJ2).